The following is a 416-amino-acid chain: Peroxisomal isocitrate dehydrogenase [NADP] (416 aa).

Residues Thr77 to Thr79 and Arg84 each bind NADP(+). Thr79 serves as a coordination point for substrate. Residues Ser96–Arg102, Arg111, and Arg134 contribute to the substrate site. Asp253 contacts Mn(2+). Lys261 is an NADP(+) binding site. Mn(2+) is bound at residue Asp276. NADP(+) is bound by residues Gly311 to His316 and Asn329. Residues Ser414–Leu416 carry the Peroxisomal targeting signal motif.

It belongs to the isocitrate and isopropylmalate dehydrogenases family. It depends on Mg(2+) as a cofactor. The cofactor is Mn(2+).

The protein localises to the peroxisome. It carries out the reaction D-threo-isocitrate + NADP(+) = 2-oxoglutarate + CO2 + NADPH. Its function is as follows. May be involved in response to oxidative stresses. This chain is Peroxisomal isocitrate dehydrogenase [NADP] (ICDH), found in Arabidopsis thaliana (Mouse-ear cress).